We begin with the raw amino-acid sequence, 94 residues long: RING finger protein Z (94 aa).

The interval 1 to 22 (MGNCNKPPKRPPNTQTSAAQPS) is disordered. Gly2 carries the N-myristoyl glycine; by host lipid modification. Residues 39–75 (CKCCWFADTNLITCNDHYLCLRCHQTMLRNSELCHIC) form an RING-type; atypical zinc finger. The short motif at 89–92 (PSAP) is the PTAP/PSAP motif element.

The protein belongs to the arenaviridae Z protein family. Interacts with protein NP; this interaction probably directs the encapsidated genome to budding sites. Interacts (via RING domain) with polymerase L; this interaction inhibits viral transcription and replication, Z partially blocks the product exit tunnel for the releasing nascent RNA product. Interacts with the glycoprotein complex; this interaction plays a role in virion budding. Interacts with host eIF4E; this interaction results in eIF4E reduced affinity for its substrate, the 5'-m7 G cap structure. Interacts (via late-budding domain) with host TSG101; this interaction is essential for budding and release of viral particles. Interacts with host RPLP0; this interaction may serve to load ribosome-like particles inside the virion. Interacts with host PML; this interaction induces PML bodies redistribution in the cytoplasm upon viral infection. Post-translationally, myristoylation is required for the role of RING finger protein Z in assembly and budding.

Its subcellular location is the virion. It localises to the host cytoplasm. The protein localises to the host perinuclear region. It is found in the host cell membrane. Functionally, plays a crucial role in virion assembly and budding. Expressed late in the virus life cycle, it acts as an inhibitor of viral transcription and RNA synthesis by interacting with the viral polymerase L. Presumably recruits the NP encapsidated genome to cellular membranes at budding sites via direct interaction with NP. Plays critical roles in the final steps of viral release by interacting with host TSG101, a member of the vacuolar protein-sorting pathway and using other cellular host proteins involved in vesicle formation pathway. The budding of the virus progeny occurs after association of protein Z with the viral glycoprotein complex SSP-GP1-GP2 at the cell periphery, step that requires myristoylation of protein Z. Also selectively represses protein production by associating with host eIF4E. In cell-based minigenome assay, has an inhibitory effect on the ribonucleoprotein machinery (vRNP), which is responsible for the replication and transcription of the viral genome. The protein is RING finger protein Z of Calomys callosus (Large vesper mouse).